Consider the following 348-residue polypeptide: 3-methyl-2-oxobutanoate dehydrogenase subunit beta (348 aa).

Residues Glu-51, 80–82 (LAE), Gln-104, and 108–111 (FSYP) each bind thiamine diphosphate. Substrate is bound by residues 105 to 108 (FDGF) and His-151. Residue His-151 is the Proton acceptor of the active site.

Heteromer of E1 alpha (BkdA) and beta (BkdB) subunits. Part of the BCKADH complex, consisting of multiple copies of BkdA/BkdB (E1), BkdC (E2) and Lpd (E3). The cofactor is thiamine diphosphate.

It carries out the reaction N(6)-[(R)-lipoyl]-L-lysyl-[protein] + 3-methyl-2-oxobutanoate + H(+) = N(6)-[(R)-S(8)-2-methylpropanoyldihydrolipoyl]-L-lysyl-[protein] + CO2. Its function is as follows. Component of the branched-chain alpha-ketoacid dehydrogenase (BCKADH) complex, that catalyzes the overall conversion of branched-chain alpha-ketoacids to acyl-CoA and CO(2). This chain is 3-methyl-2-oxobutanoate dehydrogenase subunit beta (bkdB), found in Mycobacterium tuberculosis (strain CDC 1551 / Oshkosh).